Here is a 643-residue protein sequence, read N- to C-terminus: Threonine--tRNA ligase (643 aa).

The TGS domain maps to 1-61; it reads MIKVTLKDGS…KEDVSLSICT (61 aa). Positions 240–540 are catalytic; it reads DHNKLGRELK…LIEKYAGAFP (301 aa). The Zn(2+) site is built by Cys335, His386, and His517.

The protein belongs to the class-II aminoacyl-tRNA synthetase family. Homodimer. It depends on Zn(2+) as a cofactor.

The protein resides in the cytoplasm. It catalyses the reaction tRNA(Thr) + L-threonine + ATP = L-threonyl-tRNA(Thr) + AMP + diphosphate + H(+). Catalyzes the attachment of threonine to tRNA(Thr) in a two-step reaction: L-threonine is first activated by ATP to form Thr-AMP and then transferred to the acceptor end of tRNA(Thr). Also edits incorrectly charged L-seryl-tRNA(Thr). This chain is Threonine--tRNA ligase, found in Clostridium botulinum (strain Eklund 17B / Type B).